We begin with the raw amino-acid sequence, 275 residues long: Large ribosomal subunit protein uL2c (275 aa).

Disordered regions lie at residues 36 to 56 and 224 to 275; these read KNHRRQGRNSRGIITSRHRGK and VMNP…RKRK. Basic residues predominate over residues 255–275; sequence LGRKTRKKPKYSNRYILRKRK.

This sequence belongs to the universal ribosomal protein uL2 family. As to quaternary structure, part of the 50S ribosomal subunit.

It localises to the plastid. The protein localises to the chloroplast. This chain is Large ribosomal subunit protein uL2c (rpl2), found in Gracilaria tenuistipitata var. liui (Red alga).